Consider the following 338-residue polypeptide: MKNSADITVLGAGSYGTALAISLASNGHKTLLWGHDPVHMQTLAQDKCNQAFLPGIAFPDCLQIEADLAKALAASNNVLVVVPSHVFGTVLEQAKPLLRSDARIVWATKGLEPETGRLLQDVARDVLGEQYPLAVLSGPTFAKELAMGLPTAISVAGTCPTFTNYLVELLHSPKRLRVYANDDFTGLQLGGAVKNVIAIGAGMSDGIGFGANARTALITRGLVELTRLGEALGANAATFMGMAGLGDLVLTCTDNQSRNRRFGLALGKGCDVMTAQAEIGQVVEGYRNTKEVFTLAKRLGVEMPITEQIYQVLYQGKSPVDAAKELLSREKKSETPAQ.

4 residues coordinate NADPH: serine 14, tyrosine 15, histidine 35, and lysine 109. Residues lysine 109, glycine 138, and threonine 140 each contribute to the sn-glycerol 3-phosphate site. Alanine 142 serves as a coordination point for NADPH. Sn-glycerol 3-phosphate is bound by residues lysine 194, aspartate 247, serine 257, arginine 258, and asparagine 259. Lysine 194 acts as the Proton acceptor in catalysis. Arginine 258 provides a ligand contact to NADPH. Valine 282 and glutamate 284 together coordinate NADPH.

The protein belongs to the NAD-dependent glycerol-3-phosphate dehydrogenase family.

The protein localises to the cytoplasm. It catalyses the reaction sn-glycerol 3-phosphate + NAD(+) = dihydroxyacetone phosphate + NADH + H(+). The catalysed reaction is sn-glycerol 3-phosphate + NADP(+) = dihydroxyacetone phosphate + NADPH + H(+). It participates in membrane lipid metabolism; glycerophospholipid metabolism. Catalyzes the reduction of the glycolytic intermediate dihydroxyacetone phosphate (DHAP) to sn-glycerol 3-phosphate (G3P), the key precursor for phospholipid synthesis. This chain is Glycerol-3-phosphate dehydrogenase [NAD(P)+], found in Shewanella baltica (strain OS155 / ATCC BAA-1091).